The sequence spans 380 residues: Cytochrome b (380 aa).

4 helical membrane-spanning segments follow: residues 33–53, 77–98, 113–133, and 178–198; these read FGSL…FLAM, WLIR…FIHV, WNIG…GYVL, and FFAF…VHLL. Residues His-83 and His-97 each coordinate heme b. His-182 and His-196 together coordinate heme b. His-201 serves as a coordination point for a ubiquinone. A run of 4 helical transmembrane segments spans residues 226–246, 288–308, 320–340, and 347–367; these read IKDI…VLFF, LGGV…PLIN, ITQA…WIGG, and FTMI…MFMF.

This sequence belongs to the cytochrome b family. The cytochrome bc1 complex contains 11 subunits: 3 respiratory subunits (MT-CYB, CYC1 and UQCRFS1), 2 core proteins (UQCRC1 and UQCRC2) and 6 low-molecular weight proteins (UQCRH/QCR6, UQCRB/QCR7, UQCRQ/QCR8, UQCR10/QCR9, UQCR11/QCR10 and a cleavage product of UQCRFS1). This cytochrome bc1 complex then forms a dimer. The cofactor is heme b.

Its subcellular location is the mitochondrion inner membrane. In terms of biological role, component of the ubiquinol-cytochrome c reductase complex (complex III or cytochrome b-c1 complex) that is part of the mitochondrial respiratory chain. The b-c1 complex mediates electron transfer from ubiquinol to cytochrome c. Contributes to the generation of a proton gradient across the mitochondrial membrane that is then used for ATP synthesis. The chain is Cytochrome b (MT-CYB) from Calomys musculinus (Drylands vesper mouse).